Here is a 169-residue protein sequence, read N- to C-terminus: Nucleoside diphosphate kinase 3 (169 aa).

Lys-29, Arg-105, Thr-111, Arg-122, Val-129, and Asn-132 together coordinate ADP. His-135 acts as the Pros-phosphohistidine intermediate in catalysis.

The protein belongs to the NDK family. Homohexamer. Interacts (via its N-terminal region) with KAT5; this interaction enables recruitment of NME3 at DNA damage sites where it plays a role in the repair of DNA. Found in association with several ciliary nephronophthisis proteins, including NEK8, CEP164, ANKS6. The cofactor is Mg(2+).

It is found in the mitochondrion outer membrane. The protein localises to the cytoplasm. It localises to the cytoskeleton. The protein resides in the cilium basal body. It carries out the reaction a 2'-deoxyribonucleoside 5'-diphosphate + ATP = a 2'-deoxyribonucleoside 5'-triphosphate + ADP. It catalyses the reaction a ribonucleoside 5'-diphosphate + ATP = a ribonucleoside 5'-triphosphate + ADP. Catalyzes the phosphorylation of ribonucleosides and deoxyribonucleoside diphosphates, other than ATP, into the corresponding triphosphates with ATP as the major phosphate donor. The ATP gamma phosphate is transferred to the nucleoside diphosphate beta phosphate via a ping-pong mechanism, using a phosphorylated active-site intermediate. Through the catalyzed exchange of gamma-phosphate between di- and triphosphonucleosides participates in regulation of intracellular nucleotide homeostasis. Inhibits granulocyte differentiation. May be required for ciliary function during renal development. Its function is as follows. Independently of its kinase activity, facilitates mitochondrial tethering prior to membrane fusion through its direct membrane-binding and hexamerization. Implicated in repair of both single- and double-stranded breaks in DNA through its association with the ribonucleotide reductase complex (RNR complex) via its interaction with the histone acetyltransferase KAT5, this interaction enables recruitment of NME3 at DNA damage sites where it plays a role in the repair of DNA, independently of its kinase activity. The protein is Nucleoside diphosphate kinase 3 of Homo sapiens (Human).